Here is a 636-residue protein sequence, read N- to C-terminus: Transcription termination factor FttA (636 aa).

The tract at residues 4 to 72 (ELELKRIRDE…VVFRWNVDKR (69 aa)) is KHa. A KHb region spans residues 73 to 140 (KDPAETKDYI…WQPKTIRTPP (68 aa)). The interval 181 to 383 (NIRMNALGGF…LLIEATYGGP (203 aa)) is metallo-beta-lactamase N-terminus. Zn(2+)-binding residues include His242, His244, Asp246, His247, His329, and Asp352. The interval 384–577 (QDRIPSRQES…LKVFTLEGFS (194 aa)) is beta-Casp. A metallo-beta-lactamase C-terminus region spans residues 578–636 (GHSSRSQISQFLRRIQPRPKVVIVNHGEESKCVSLSTMIHKKLRKSTKSPKNLEVVLLK). Residue His603 coordinates Zn(2+).

Belongs to the metallo-beta-lactamase superfamily. RNA-metabolizing metallo-beta-lactamase-like family. FttA subfamily. Homodimer. Interacts with RNA polymerase (RNAP), interacts with the Spt4-Spt5 complex. Requires Zn(2+) as cofactor.

Terminates transcription on the whole genome. Termination is linked to FttA-mediated RNA cleavage and does not require NTP hydrolysis. Cleaves endonucleolytically at the RNA exit channel of RNA polymerase (RNAP); the 5'-3' exonuclease activity of this protein degrades the nascent RNA released from RNAP. Its function is as follows. Terminates transcription genome-wide in M.maripaludis. Restores wild-type growth to a strain of Methanococcus maripaludis depleted for this gene at 22 degrees Celsius and prevents transcriptional read-through. Transcription termination is most effective in vivo on RNAs with more than one U4-tract in their 3'-ends. Has endonuclease activity after U-rich tracts in transcription termination sequences. The polypeptide is Transcription termination factor FttA (Lokiarchaeum sp. (strain GC14_75)).